The primary structure comprises 704 residues: Elongation factor G (704 aa).

The region spanning 10-290 (TKVRNIGIMA…AVVDYLPSPL (281 aa)) is the tr-type G domain. Residues 19–26 (AHIDAGKT), 83–87 (DTPGH), and 137–140 (NKMD) contribute to the GTP site.

It belongs to the TRAFAC class translation factor GTPase superfamily. Classic translation factor GTPase family. EF-G/EF-2 subfamily.

The protein resides in the cytoplasm. Functionally, catalyzes the GTP-dependent ribosomal translocation step during translation elongation. During this step, the ribosome changes from the pre-translocational (PRE) to the post-translocational (POST) state as the newly formed A-site-bound peptidyl-tRNA and P-site-bound deacylated tRNA move to the P and E sites, respectively. Catalyzes the coordinated movement of the two tRNA molecules, the mRNA and conformational changes in the ribosome. This chain is Elongation factor G, found in Beutenbergia cavernae (strain ATCC BAA-8 / DSM 12333 / CCUG 43141 / JCM 11478 / NBRC 16432 / NCIMB 13614 / HKI 0122).